A 321-amino-acid chain; its full sequence is Fe-S cluster assembly protein DRE2 (321 aa).

The interval 1-161 (MPAPVPPTAF…STPVTLSGAR (161 aa)) is N-terminal SAM-like domain. The tract at residues 123–168 (PSPSTLAYTSPSAPSLPTVASDPSPAPSSSTPVTLSGARPLQLRRN) is disordered. The span at 139 to 156 (PTVASDPSPAPSSSTPVT) shows a compositional bias: low complexity. Positions 162 to 197 (PLQLRRNGDKARKAALWAIDSPLIPDGGKSLLTPAD) are linker. [2Fe-2S] cluster-binding residues include Cys203, Cys219, Cys222, and Cys224. Residues 203-224 (CVFPAENGKPVKRRRACKDCTC) are fe-S binding site A. [4Fe-4S] cluster is bound by residues Cys285, Cys288, Cys296, and Cys299. 2 consecutive short sequence motifs (cx2C motif) follow at residues 285 to 288 (CGSC) and 296 to 299 (CSSC). Residues 285-299 (CGSCYLGDAFRCSSC) are fe-S binding site B.

Belongs to the anamorsin family. In terms of assembly, monomer. Interacts with TAH18. Interacts with MIA40. Requires [2Fe-2S] cluster as cofactor. The cofactor is [4Fe-4S] cluster.

The protein localises to the cytoplasm. Its subcellular location is the mitochondrion intermembrane space. Functionally, component of the cytosolic iron-sulfur (Fe-S) protein assembly (CIA) machinery required for the maturation of extramitochondrial Fe-S proteins. Part of an electron transfer chain functioning in an early step of cytosolic Fe-S biogenesis, facilitating the de novo assembly of a [4Fe-4S] cluster on the scaffold complex CFD1-NBP35. Electrons are transferred to DRE2 from NADPH via the FAD- and FMN-containing protein TAH18. TAH18-DRE2 are also required for the assembly of the diferric tyrosyl radical cofactor of ribonucleotide reductase (RNR), probably by providing electrons for reduction during radical cofactor maturation in the catalytic small subunit RNR2. This is Fe-S cluster assembly protein DRE2 from Cryptococcus neoformans var. neoformans serotype D (strain B-3501A) (Filobasidiella neoformans).